Here is a 236-residue protein sequence, read N- to C-terminus: Phosphoribosylaminoimidazole-succinocarboxamide synthase (236 aa).

It belongs to the SAICAR synthetase family.

It carries out the reaction 5-amino-1-(5-phospho-D-ribosyl)imidazole-4-carboxylate + L-aspartate + ATP = (2S)-2-[5-amino-1-(5-phospho-beta-D-ribosyl)imidazole-4-carboxamido]succinate + ADP + phosphate + 2 H(+). It functions in the pathway purine metabolism; IMP biosynthesis via de novo pathway; 5-amino-1-(5-phospho-D-ribosyl)imidazole-4-carboxamide from 5-amino-1-(5-phospho-D-ribosyl)imidazole-4-carboxylate: step 1/2. This Streptococcus equi subsp. zooepidemicus (strain H70) protein is Phosphoribosylaminoimidazole-succinocarboxamide synthase.